The sequence spans 1263 residues: Kinesin-like protein KIN-12E (1263 aa).

Residues 21–44 are disordered; the sequence is PAPSESLRSVPCTPEANTVSRDNH. The span at 35–44 shows a compositional bias: polar residues; that stretch reads EANTVSRDNH. Residues 93–430 enclose the Kinesin motor domain; that stretch reads NVQVIIRTRP…LKFAQRAKLI (338 aa). 174-181 lines the ATP pocket; the sequence is GQTGSGKT. Coiled-coil stretches lie at residues 679 to 737, 764 to 805, 831 to 881, 905 to 966, 1091 to 1168, and 1193 to 1251; these read SKKL…KIRS, AEAH…AEEN, ALEV…KRLL, SEKS…HQSE, TDLL…TIQE, and LRKE…VLSL.

The protein belongs to the TRAFAC class myosin-kinesin ATPase superfamily. Kinesin family. KIN-12 subfamily.

This Arabidopsis thaliana (Mouse-ear cress) protein is Kinesin-like protein KIN-12E.